Reading from the N-terminus, the 333-residue chain is Holliday junction branch migration complex subunit RuvB (333 aa).

Positions Met-1 to Tyr-182 are large ATPase domain (RuvB-L). ATP-binding positions include Leu-21, Arg-22, Gly-63, Lys-66, Thr-67, Thr-68, Glu-129 to Phe-131, Arg-172, Tyr-182, and Arg-219. Residue Thr-67 participates in Mg(2+) binding. The small ATPAse domain (RuvB-S) stretch occupies residues Glu-183 to Asp-253. Residues Arg-256–Lys-333 form a head domain (RuvB-H) region. Positions 292, 311, 313, and 316 each coordinate DNA.

Belongs to the RuvB family. Homohexamer. Forms an RuvA(8)-RuvB(12)-Holliday junction (HJ) complex. HJ DNA is sandwiched between 2 RuvA tetramers; dsDNA enters through RuvA and exits via RuvB. An RuvB hexamer assembles on each DNA strand where it exits the tetramer. Each RuvB hexamer is contacted by two RuvA subunits (via domain III) on 2 adjacent RuvB subunits; this complex drives branch migration. In the full resolvosome a probable DNA-RuvA(4)-RuvB(12)-RuvC(2) complex forms which resolves the HJ.

The protein localises to the cytoplasm. The catalysed reaction is ATP + H2O = ADP + phosphate + H(+). Functionally, the RuvA-RuvB-RuvC complex processes Holliday junction (HJ) DNA during genetic recombination and DNA repair, while the RuvA-RuvB complex plays an important role in the rescue of blocked DNA replication forks via replication fork reversal (RFR). RuvA specifically binds to HJ cruciform DNA, conferring on it an open structure. The RuvB hexamer acts as an ATP-dependent pump, pulling dsDNA into and through the RuvAB complex. RuvB forms 2 homohexamers on either side of HJ DNA bound by 1 or 2 RuvA tetramers; 4 subunits per hexamer contact DNA at a time. Coordinated motions by a converter formed by DNA-disengaged RuvB subunits stimulates ATP hydrolysis and nucleotide exchange. Immobilization of the converter enables RuvB to convert the ATP-contained energy into a lever motion, pulling 2 nucleotides of DNA out of the RuvA tetramer per ATP hydrolyzed, thus driving DNA branch migration. The RuvB motors rotate together with the DNA substrate, which together with the progressing nucleotide cycle form the mechanistic basis for DNA recombination by continuous HJ branch migration. Branch migration allows RuvC to scan DNA until it finds its consensus sequence, where it cleaves and resolves cruciform DNA. The sequence is that of Holliday junction branch migration complex subunit RuvB from Streptococcus suis (strain 98HAH33).